Consider the following 596-residue polypeptide: Probable protein phosphatase 2C 26 (596 aa).

The segment at 122-154 (SGPLDPAVPFSGPLPAKPPKPASSSSRGFSRRF) is disordered. The PPM-type phosphatase domain occupies 177–584 (LRRDDGVQWA…DDVTVMVISL (408 aa)). Mn(2+)-binding residues include Asp212, Gly213, Asp512, and Asp575.

This sequence belongs to the PP2C family. It depends on Mg(2+) as a cofactor. Mn(2+) is required as a cofactor.

It carries out the reaction O-phospho-L-seryl-[protein] + H2O = L-seryl-[protein] + phosphate. The catalysed reaction is O-phospho-L-threonyl-[protein] + H2O = L-threonyl-[protein] + phosphate. The polypeptide is Probable protein phosphatase 2C 26 (Oryza sativa subsp. japonica (Rice)).